We begin with the raw amino-acid sequence, 367 residues long: uncharacterized protein (367 aa).

Residues 1–96 (ITLHRLAELV…LTATLQLQPV (96 aa)) form the FAD-binding PCMH-type domain.

To M.tuberculosis Rv3790.

This is an uncharacterized protein from Streptomyces coelicolor.